The following is an 83-amino-acid chain: Disintegrin isoform D-2 (83 aa).

A Disintegrin domain is found at 2-83 (PPVCGNELLE…GKSSDCPWNH (82 aa)). Disulfide bonds link cysteine 5-cysteine 24, cysteine 16-cysteine 34, cysteine 18-cysteine 29, cysteine 28-cysteine 51, cysteine 42-cysteine 48, cysteine 47-cysteine 72, and cysteine 60-cysteine 79. The Cell attachment site motif lies at 64 to 66 (RGD).

It belongs to the venom metalloproteinase (M12B) family. P-II subfamily. P-IIa sub-subfamily. In terms of assembly, monomer (disintegrin). As to expression, expressed by the venom gland.

It is found in the secreted. Its function is as follows. Inhibits fibrinogen interaction with platelets. Acts by binding to the alpha-IIb/beta-3 (ITGA2B/ITGB3) on the platelet surface and inhibits aggregation induced by ADP, thrombin, platelet-activating factor and collagen. In Bitis arietans (African puff adder), this protein is Disintegrin isoform D-2.